We begin with the raw amino-acid sequence, 105 residues long: Ribonuclease P protein component 4 (105 aa).

Residues Cys63, Cys66, Cys89, and Cys92 each coordinate Zn(2+).

The protein belongs to the eukaryotic/archaeal RNase P protein component 4 family. In terms of assembly, consists of a catalytic RNA component and at least 4-5 protein subunits. Zn(2+) is required as a cofactor.

The protein resides in the cytoplasm. The enzyme catalyses Endonucleolytic cleavage of RNA, removing 5'-extranucleotides from tRNA precursor.. Part of ribonuclease P, a protein complex that generates mature tRNA molecules by cleaving their 5'-ends. This is Ribonuclease P protein component 4 from Methanoculleus marisnigri (strain ATCC 35101 / DSM 1498 / JR1).